The sequence spans 148 residues: Arginine repressor (148 aa).

It belongs to the ArgR family.

It is found in the cytoplasm. Its pathway is amino-acid biosynthesis; L-arginine biosynthesis [regulation]. Functionally, regulates arginine biosynthesis genes. The sequence is that of Arginine repressor from Pelodictyon phaeoclathratiforme (strain DSM 5477 / BU-1).